Here is a 539-residue protein sequence, read N- to C-terminus: uncharacterized protein (539 aa).

Transmembrane regions (helical) follow at residues leucine 4–leucine 22, isoleucine 27–threonine 46, leucine 56–phenylalanine 78, alanine 90–isoleucine 112, and proline 155–phenylalanine 177. RCK C-terminal domains lie at lysine 187–glutamate 269 and isoleucine 271–aspartate 352. 4 helical membrane passes run phenylalanine 360–leucine 382, leucine 422–phenylalanine 444, serine 453–glycine 475, and tyrosine 516–leucine 538.

The protein belongs to the AAE transporter (TC 2.A.81) family.

The protein localises to the cell membrane. This is an uncharacterized protein from Corynebacterium glutamicum (strain ATCC 13032 / DSM 20300 / JCM 1318 / BCRC 11384 / CCUG 27702 / LMG 3730 / NBRC 12168 / NCIMB 10025 / NRRL B-2784 / 534).